The following is a 499-amino-acid chain: Putative ribose/galactose/methyl galactoside import ATP-binding protein 3 (499 aa).

ABC transporter domains follow at residues 8–243 (LRMR…VGRE) and 253–497 (SKIG…TGEE). 40–47 (GENGAGKS) is an ATP binding site.

It belongs to the ABC transporter superfamily. Carbohydrate importer 2 (CUT2) (TC 3.A.1.2) family.

It is found in the cell inner membrane. The enzyme catalyses D-ribose(out) + ATP + H2O = D-ribose(in) + ADP + phosphate + H(+). It catalyses the reaction D-galactose(out) + ATP + H2O = D-galactose(in) + ADP + phosphate + H(+). Part of an ABC transporter complex involved in carbohydrate import. Could be involved in ribose, galactose and/or methyl galactoside import. Responsible for energy coupling to the transport system. The polypeptide is Putative ribose/galactose/methyl galactoside import ATP-binding protein 3 (Agrobacterium fabrum (strain C58 / ATCC 33970) (Agrobacterium tumefaciens (strain C58))).